The primary structure comprises 425 residues: Histidine--tRNA ligase 2 (425 aa).

This sequence belongs to the class-II aminoacyl-tRNA synthetase family. As to quaternary structure, homodimer.

It is found in the cytoplasm. It catalyses the reaction tRNA(His) + L-histidine + ATP = L-histidyl-tRNA(His) + AMP + diphosphate + H(+). The polypeptide is Histidine--tRNA ligase 2 (Shouchella clausii (strain KSM-K16) (Alkalihalobacillus clausii)).